A 503-amino-acid chain; its full sequence is Maturase K (503 aa).

This sequence belongs to the intron maturase 2 family. MatK subfamily.

Its subcellular location is the plastid. It is found in the chloroplast. In terms of biological role, usually encoded in the trnK tRNA gene intron. Probably assists in splicing its own and other chloroplast group II introns. This is Maturase K from Thryptomene saxicola (Rock thryptomene).